A 2856-amino-acid chain; its full sequence is Lipopolysaccharide-responsive and beige-like anchor protein (2856 aa).

Disordered regions lie at residues 1–35 (MASEDNRAPSRPPTGDDGGGGGKEETPTEGGALSL) and 939–1107 (EQRK…DDDY). The residue at position 2 (alanine 2) is an N-acetylalanine. 3 positions are modified to phosphoserine: serine 10, serine 979, and serine 1003. The span at 991 to 1009 (ENSSIGRASSIDSASNTEL) shows a compositional bias: polar residues. The segment covering 1010–1026 (QTHDMSSDEKKVERENQ) has biased composition (basic and acidic residues). Residues 1073-1082 (SEVSASISSP) show a composition bias toward low complexity. Phosphoserine occurs at positions 1097, 1132, 1136, 1219, 1221, 1228, 1244, and 1258. The interval 1253–1296 (FELKASTSTEAPQPQRHGLEISRQQEQTAQGTAPDAVDQQRRDS) is disordered. The span at 1274 to 1283 (SRQQEQTAQG) shows a compositional bias: polar residues. One copy of the WD 1 repeat lies at 1298–1340 (STMFRIPEFKWSQMHQRLLTDLLFSIETDIQMWRSHSTKTVMD). Residues serine 1487 and serine 1497 each carry the phosphoserine modification. A helical membrane pass occupies residues 1529–1545 (AQFLALAVVYFISVLMV). Disordered stretches follow at residues 1556-1621 (DERH…LGSG) and 1750-1778 (SAVSVVSSVDPTHASDTGGESPGSRSPKC). Over residues 1563-1573 (LKETSSDNGNA) the composition is skewed to polar residues. Low complexity predominate over residues 1586-1601 (SSLTLSSVEESLEGTS). Phosphoserine occurs at positions 1608, 1770, 1773, and 2057. The BEACH-type PH domain maps to 2066–2174 (NLAGPVSLST…TVKKVVNYLP (109 aa)). The BEACH domain occupies 2193–2482 (ATPRQLFKAS…QLLIEPHPPR (290 aa)). Position 2489 is a phosphoserine (serine 2489). WD repeat units follow at residues 2584 to 2626 (DQSI…LIQV), 2629 to 2672 (GHWD…SGIG), 2688 to 2728 (GHDY…RTLE), 2770 to 2809 (ETDDHIRAIQLSRDGQYLLTGGDNGVVIVRQVSDLKQLFA), and 2812 to 2851 (GCDAGIRAMALSFDQRCIISGMASGSIVLFYNDFNRWHHE).

In terms of assembly, interacts with TOM1 and TOLLIP. As to expression, isoform 1 is expressed in the brain, is absent from the lung and the bone marrow and is less abundant in the spleen. Isoform 2 is expressed in the spleen, lung, brain and bone marrow. Isoform 3 is expressed in the brain, is absent from the bone marrow and is less abundant in the spleen and lung.

Its subcellular location is the cell membrane. It is found in the endoplasmic reticulum membrane. The protein localises to the golgi apparatus. The protein resides in the trans-Golgi network membrane. It localises to the lysosome membrane. In terms of biological role, involved in coupling signal transduction and vesicle trafficking to enable polarized secretion and/or membrane deposition of immune effector molecules. Involved in phagophore growth during mitophagy by regulating ATG9A trafficking to mitochondria. This Mus musculus (Mouse) protein is Lipopolysaccharide-responsive and beige-like anchor protein (Lrba).